The chain runs to 94 residues: Scorpine (94 aa).

The signal sequence occupies residues 1–19 (MNSKLTALIFLGLIAIAYC). A BetaSPN-type CS-alpha/beta domain is found at 55–94 (EFQCMANMDMLGNCEKHCQTSGEKGYCHGTKCKCGTPLSY). 3 disulfide bridges follow: cysteine 58/cysteine 81, cysteine 68/cysteine 86, and cysteine 72/cysteine 88.

The protein belongs to the long chain scorpion toxin family. Class 3 subfamily. Expressed by the venom gland.

The protein localises to the secreted. The protein resides in the target cell membrane. This full-length protein shows antibacterial activity against B.subtilis and K.pneumoniae. Also shows a potent inhibitory effect on the ookinete (ED(50) 0.7 uM) and gamete (ED(50) 10 uM) stages of Plasmodium berghei development. In addition, induces cell membrane disruption, leakage currents and cell death on HEK293 cell line (tested at 25 uM). This Pandinus imperator (Emperor scorpion) protein is Scorpine.